The primary structure comprises 295 residues: Indole-3-glycerol phosphate synthase (295 aa).

The protein belongs to the TrpC family.

The enzyme catalyses 1-(2-carboxyphenylamino)-1-deoxy-D-ribulose 5-phosphate + H(+) = (1S,2R)-1-C-(indol-3-yl)glycerol 3-phosphate + CO2 + H2O. It functions in the pathway amino-acid biosynthesis; L-tryptophan biosynthesis; L-tryptophan from chorismate: step 4/5. The chain is Indole-3-glycerol phosphate synthase from Prochlorococcus marinus (strain NATL1A).